We begin with the raw amino-acid sequence, 134 residues long: Large ribosomal subunit protein bL19 (134 aa).

The disordered stretch occupies residues 110 to 134 (ARLHQEEGPSSAAPASTPPAAAPQA). The segment covering 125–134 (STPPAAAPQA) has biased composition (pro residues).

This sequence belongs to the bacterial ribosomal protein bL19 family.

Its function is as follows. This protein is located at the 30S-50S ribosomal subunit interface and may play a role in the structure and function of the aminoacyl-tRNA binding site. In Anaeromyxobacter sp. (strain Fw109-5), this protein is Large ribosomal subunit protein bL19.